The following is a 199-amino-acid chain: Interleukin-11 (199 aa).

The first 21 residues, 1–21, serve as a signal peptide directing secretion; it reads MNCVCRLVLVVLSLWPDTAVA. Positions 182 to 190 are important for interaction with IL11RA and for the stimulation of cell proliferation; the sequence is HLTLDWAVR.

This sequence belongs to the IL-6 superfamily. As to quaternary structure, interacts with IL11RA to associate with IL6ST, giving rise to a multimeric signaling complex.

It localises to the secreted. Cytokine that stimulates the proliferation of hematopoietic stem cells and megakaryocyte progenitor cells and induces megakaryocyte maturation resulting in increased platelet production. Also promotes the proliferation of hepatocytes in response to liver damage. Binding to its receptor formed by IL6ST and IL11RA activates a signaling cascade that promotes cell proliferation. Signaling leads to the activation of intracellular protein kinases and the phosphorylation of STAT3. The interaction with the membrane-bound IL11RA and IL6ST stimulates 'classic signaling', whereas the binding of IL11 and soluble IL11RA to IL6ST stimulates 'trans-signaling'. The protein is Interleukin-11 (IL11) of Macaca fascicularis (Crab-eating macaque).